The primary structure comprises 76 residues: Sulfur carrier protein TusA (76 aa).

Cys15 functions as the Cysteine persulfide intermediate in the catalytic mechanism.

The protein belongs to the sulfur carrier protein TusA family. In terms of assembly, mostly a monomer, a small portion forms homodimer via intermolecular disulfide bonds. Tightly interacts with DsrEFH.

Its subcellular location is the cytoplasm. It participates in energy metabolism; sulfur metabolism. Its function is as follows. Sulfur carrier protein involved in sulfur trafficking for oxidative dissimilatory sulfur metabolism. Component of a sulfur relay system that starts with the sulfur-mobilizing rhodanese-like protein Rhd_2599 (Alvin_2599), which transfers the sulfur from a low-molecular-weight thiol, maybe glutathione, to the TusA protein (Alvin_2600); TusA serves as the sulfur donor for DsrEFH, which persulfurates DsrC; persulfurated DsrC very probably serves as a direct substrate for reverse-acting sulfite reductase, DsrAB. TusA seems to be not exclusively dedicated to sulfur oxidation and may have other important roles in the cell. Might also act as a sulfur mediator required for 2-thiouridine formation of tRNA. This chain is Sulfur carrier protein TusA, found in Allochromatium vinosum (strain ATCC 17899 / DSM 180 / NBRC 103801 / NCIMB 10441 / D) (Chromatium vinosum).